We begin with the raw amino-acid sequence, 138 residues long: Small ribosomal subunit protein uS11c (138 aa).

Positions 1 to 23 are disordered; sequence MAKPIPRIGSRRNGRIGSRKSAR. Positions 9–23 are enriched in basic residues; that stretch reads GSRRNGRIGSRKSAR.

Belongs to the universal ribosomal protein uS11 family. Part of the 30S ribosomal subunit.

The protein resides in the plastid. It is found in the chloroplast. This is Small ribosomal subunit protein uS11c from Vitis vinifera (Grape).